Consider the following 524-residue polypeptide: Glutamyl-tRNA(Gln) amidotransferase subunit A, mitochondrial (524 aa).

Residues K76 and S171 each act as charge relay system in the active site. The active-site Acyl-ester intermediate is the S195.

This sequence belongs to the amidase family. GatA subfamily. Subunit of the heterotrimeric GatCAB amidotransferase (AdT) complex, composed of A (qrsl1), B (gatb) and C (gatc) subunits.

Its subcellular location is the mitochondrion. It carries out the reaction L-glutamyl-tRNA(Gln) + L-glutamine + ATP + H2O = L-glutaminyl-tRNA(Gln) + L-glutamate + ADP + phosphate + H(+). Its function is as follows. Allows the formation of correctly charged Gln-tRNA(Gln) through the transamidation of misacylated Glu-tRNA(Gln) in the mitochondria. The reaction takes place in the presence of glutamine and ATP through an activated gamma-phospho-Glu-tRNA(Gln). The chain is Glutamyl-tRNA(Gln) amidotransferase subunit A, mitochondrial (qrsl1) from Xenopus laevis (African clawed frog).